We begin with the raw amino-acid sequence, 128 residues long: Small ribosomal subunit protein uS9c (128 aa).

The disordered stretch occupies residues 106–128 (SRIKERKKYGLKKARKAPQFSKR). The span at 109–128 (KERKKYGLKKARKAPQFSKR) shows a compositional bias: basic residues.

It belongs to the universal ribosomal protein uS9 family.

It localises to the plastid. The protein localises to the chloroplast. This chain is Small ribosomal subunit protein uS9c (rps9), found in Cyanidium caldarium (Red alga).